The chain runs to 25 residues: Ocellatin-P1 (25 aa).

Leucine 25 bears the Leucine amide mark.

In terms of tissue distribution, expressed by the skin glands.

The protein resides in the secreted. In terms of biological role, antibacterial peptide that inhibits reference strains of both Gram-negative bacteria (E.coli, E.cloacae, K.pneumoniae, P.aeruginosa) and Gram-positive bacteria (S.aureus, S.epidermidis, E.faecalis, Streptococcus group B) with relatively low potencies (MIC=25-200 uM). The peptide shows very low hemolytic activity against human erythrocytes. Wheel projection demonstrates the amphipathicity of the alpha-helices is low which may explain the low antibacterial potency. The protein is Ocellatin-P1 of Leptodactylus pentadactylus (Smokey jungle frog).